Here is an 84-residue protein sequence, read N- to C-terminus: Putative membrane protein insertion efficiency factor (84 aa).

Belongs to the UPF0161 family.

It is found in the cell inner membrane. In terms of biological role, could be involved in insertion of integral membrane proteins into the membrane. The sequence is that of Putative membrane protein insertion efficiency factor from Shewanella baltica (strain OS195).